Here is a 390-residue protein sequence, read N- to C-terminus: RNA polymerase sigma factor SigA (390 aa).

Acidic residues predominate over residues 48–57 (FLEPQTDEDD). Positions 48-75 (FLEPQTDEDDAKSGKAAKSRRRTQSKKK) are disordered. The span at 62 to 75 (KAAKSRRRTQSKKK) shows a compositional bias: basic residues. The interval 158-228 (MVQSNLRLVV…TRAIADQSRT (71 aa)) is sigma-70 factor domain-2. The Interaction with polymerase core subunit RpoC motif lies at 182–185 (DLIQ). The interval 237-312 (ETISRIKKTT…ESDGETPEDQ (76 aa)) is sigma-70 factor domain-3. A sigma-70 factor domain-4 region spans residues 325 to 378 (VLDSLSPRERDVLRLRYGLDDGRMKTLEEIGQIFNVTRERIRQIEAKALRKLRH). A DNA-binding region (H-T-H motif) is located at residues 351–370 (LEEIGQIFNVTRERIRQIEA).

The protein belongs to the sigma-70 factor family. RpoD/SigA subfamily. Interacts transiently with the RNA polymerase catalytic core.

It localises to the cytoplasm. Sigma factors are initiation factors that promote the attachment of RNA polymerase to specific initiation sites and are then released. This sigma factor is the primary sigma factor during exponential growth. The chain is RNA polymerase sigma factor SigA from Nostoc sp. (strain PCC 7120 / SAG 25.82 / UTEX 2576).